The chain runs to 570 residues: MKESPLITLVKRHSETHFANIKYGYYVLIISLVYLIGLALLRAFGRRTPSRSSSAFKNKIIYRLYDIDPAIHLGILFFAVLIPFYYHYSLTTQSTVYLKRLGRLSYALIPLNLFLTLRPNWFLRKNCTYTDFIPFHKWFSRIITVIGLLHGIFFIIKWAIDDNVSLKQKLILKTFNFVGFIISILVLFLLICSIGPMRRYNYRLFYIVHNLVNVAFILLTPIHSRPGVKFPFLLLNCTLLFIHIINRIVFAKSLMILNKNANYSKTNLVHVRLPRAILPDYFEPGSHIRISPYRRINPLYWLLPSHPYTIASLAEDNSIDLIIKETSTAEPGSQIESLRSNPKSFHLDQEKTYTLINSYPPSVPEECYSQGTNIAIICGGSGISFALPLFRHFFNKENVKYLKMIWLIKNYSEYELVLDYLKTNGLTFEKKLSNNKRISVFISGEYTAETRLDEITTNIDDENSEYEMGSFNNEDEDLSISNFNSENADSNDNTPETSHSPTKENGSLIEVKSKHSFTLSNELKSFNNESAQVNQNETWLFSCGPPSLLQLSKKYCNDERINFVCETYGL.

Transmembrane regions (helical) follow at residues 21–41 (IKYG…LALL), 70–90 (AIHL…HYSL), 101–118 (LGRL…LTLR), 142–162 (IITV…AIDD), 177–197 (FVGF…IGPM), 204–224 (LFYI…PIHS), and 230–250 (FPFL…RIVF). Positions 101 to 219 (LGRLSYALIP…NLVNVAFILL (119 aa)) constitute a Ferric oxidoreductase domain. The FAD-binding FR-type domain occupies 250 to 388 (FAKSLMILNK…GGSGISFALP (139 aa)). Polar residues predominate over residues 481–505 (SNFNSENADSNDNTPETSHSPTKEN). Residues 481–507 (SNFNSENADSNDNTPETSHSPTKENGS) are disordered.

Belongs to the ferric reductase (FRE) family. AIM14 subfamily. As to quaternary structure, interacts with ribosomes.

The protein resides in the membrane. In terms of biological role, probable cell surface metalloreductase. May be involved in iron or copper homeostasis. The chain is Probable metalloreductase AIM14 (AIM14) from Saccharomyces cerevisiae (strain YJM789) (Baker's yeast).